Here is a 541-residue protein sequence, read N- to C-terminus: Chaperonin GroEL (541 aa).

Residues 29–32 (TAGP), Lys-50, 86–90 (DGTTT), Gly-416, and Asp-498 each bind ATP.

Belongs to the chaperonin (HSP60) family. Forms a cylinder of 14 subunits composed of two heptameric rings stacked back-to-back. Interacts with the co-chaperonin GroES.

Its subcellular location is the cytoplasm. It carries out the reaction ATP + H2O + a folded polypeptide = ADP + phosphate + an unfolded polypeptide.. Its function is as follows. Together with its co-chaperonin GroES, plays an essential role in assisting protein folding. The GroEL-GroES system forms a nano-cage that allows encapsulation of the non-native substrate proteins and provides a physical environment optimized to promote and accelerate protein folding. The sequence is that of Chaperonin GroEL from Anaplasma phagocytophilum (Ehrlichia phagocytophila).